The following is a 108-amino-acid chain: Abscisic stress-ripening protein 3 (108 aa).

Disordered regions lie at residues 1-34 and 84-108; these read MAEE…HHSH and FAFH…GRHH. Basic and acidic residues predominate over residues 15-24; sequence NREEEGGPVD. Residues 25–34 are compositionally biased toward basic residues; it reads HKKKVKHHSH. Basic and acidic residues predominate over residues 95–108; the sequence is AKKEKKAAEKGRHH.

Belongs to the abscisic acid and water stress-induced protein family.

This chain is Abscisic stress-ripening protein 3, found in Solanum lycopersicum (Tomato).